Here is a 466-residue protein sequence, read N- to C-terminus: Teichoic acids export ATP-binding protein TagH (466 aa).

One can recognise an ABC transporter domain in the interval N27–K249. Residue G63 to S70 participates in ATP binding. The unknown stretch occupies residues L250–Q466. Disordered stretches follow at residues N356–N403 and I439–Q466. Residues P373 to T384 are compositionally biased toward basic residues. Over residues K385–N403 the composition is skewed to low complexity. Positions N403 to L447 constitute a LysM domain. Residues E449–Q466 are compositionally biased toward polar residues.

It belongs to the ABC transporter superfamily. Teichoic acids exporter (TC 3.A.1.104.1) family. As to quaternary structure, the complex is composed of two ATP-binding proteins (TagH) and two transmembrane proteins (TagG).

The protein localises to the cell membrane. The enzyme catalyses ATP + H2O + teichoic acidSide 1 = ADP + phosphate + teichoic acidSide 2.. In terms of biological role, part of the ABC transporter complex TagGH involved in teichoic acids export. Responsible for energy coupling to the transport system. In Lactococcus lactis subsp. lactis (strain IL1403) (Streptococcus lactis), this protein is Teichoic acids export ATP-binding protein TagH.